Consider the following 185-residue polypeptide: Orotate phosphoribosyltransferase (185 aa).

5-phospho-alpha-D-ribose 1-diphosphate is bound by residues Arg94, Lys95, Lys98, His100, and 120–128 (EDVTTTGGS). Positions 124 and 152 each coordinate orotate.

This sequence belongs to the purine/pyrimidine phosphoribosyltransferase family. PyrE subfamily. Homodimer. Requires Mg(2+) as cofactor.

It carries out the reaction orotidine 5'-phosphate + diphosphate = orotate + 5-phospho-alpha-D-ribose 1-diphosphate. It participates in pyrimidine metabolism; UMP biosynthesis via de novo pathway; UMP from orotate: step 1/2. Functionally, catalyzes the transfer of a ribosyl phosphate group from 5-phosphoribose 1-diphosphate to orotate, leading to the formation of orotidine monophosphate (OMP). The chain is Orotate phosphoribosyltransferase from Thermococcus kodakarensis (strain ATCC BAA-918 / JCM 12380 / KOD1) (Pyrococcus kodakaraensis (strain KOD1)).